The chain runs to 2273 residues: Acetyl-CoA carboxylase, mitochondrial (2273 aa).

The N-terminal 104 residues, 1–104 (KGKTITHGQS…RGNIHKHTRL (104 aa)), are a transit peptide targeting the mitochondrion. The Biotin carboxylation domain occupies 134-635 (VISKILIANN…STGWLDDLIL (502 aa)). One can recognise an ATP-grasp domain in the interval 292 to 484 (KTNFVSVPDD…LPATQLQIAM (193 aa)). Position 332–337 (332–337 (GGGGKG)) interacts with ATP. Arginine 459 is a catalytic residue. One can recognise a Biotinyl-binding domain in the interval 763 to 837 (LEAELNPTQV…EAGDVIAKLT (75 aa)). N6-biotinyllysine is present on lysine 804. Residues 1532 to 1867 (PYSVKDWLQP…KRDMSPPLLE (336 aa)) enclose the CoA carboxyltransferase N-terminal domain. The tract at residues 1532-2187 (PYSVKDWLQP…EGQVIKRLQK (656 aa)) is carboxyltransferase. CoA is bound by residues arginine 1776, lysine 2080, and arginine 2082. Positions 1871-2187 (RWDRDVDFKP…EGQVIKRLQK (317 aa)) constitute a CoA carboxyltransferase C-terminal domain.

It depends on biotin as a cofactor.

Its subcellular location is the mitochondrion. The catalysed reaction is hydrogencarbonate + acetyl-CoA + ATP = malonyl-CoA + ADP + phosphate + H(+). It catalyses the reaction N(6)-biotinyl-L-lysyl-[protein] + hydrogencarbonate + ATP = N(6)-carboxybiotinyl-L-lysyl-[protein] + ADP + phosphate + H(+). It participates in lipid metabolism; malonyl-CoA biosynthesis; malonyl-CoA from acetyl-CoA: step 1/1. Functionally, catalyzes the rate-limiting reaction in the mitochondrial fatty acid synthesis (FAS) type II pathway. Responsible for the production of the mitochondrial malonyl-CoA, used for the biosynthesis of the cofactor lipoic acid. This protein carries three functions: biotin carboxyl carrier protein, biotin carboxylase, and carboxyltransferase. The protein is Acetyl-CoA carboxylase, mitochondrial (HFA1) of Saccharomyces cerevisiae (strain Lalvin EC1118 / Prise de mousse) (Baker's yeast).